A 289-amino-acid chain; its full sequence is Aquaporin PIP1-1 (289 aa).

Residues 1–36 form a disordered region; the sequence is MEGKEEDVRLGANRYSERQPIGTAAQGAGDDKDYKE. 2 consecutive transmembrane segments (helical) span residues 58–78 and 93–115; these read IAEF…VMGV and IAWS…SGGH. The NPA 1 motif lies at 117–119; the sequence is NPA. The next 3 membrane-spanning stretches (helical) occupy residues 136–156, 178–198, and 212–232; these read IFYI…VKGF, GDGL…VFSA, and ILAP…TIPI. The short motif at 238–240 is the NPA 2 element; that stretch reads NPA. Residues 260–280 traverse the membrane as a helical segment; the sequence is IFWVGPFVGAALAAIYHQVII.

Belongs to the MIP/aquaporin (TC 1.A.8) family. PIP (TC 1.A.8.11) subfamily. As to expression, expressed in roots, leaves and anthers.

It localises to the cell membrane. Functionally, may function as water channel to facilitate the transport of water across cell membrane. The chain is Aquaporin PIP1-1 (PIP1-1) from Oryza sativa subsp. japonica (Rice).